Consider the following 391-residue polypeptide: N-acetylaspartylglutamate synthase A (391 aa).

One can recognise an ATP-grasp domain in the interval 115-300 (FQELAGHGVP…VGGIIADYTM (186 aa)). Residues lysine 154, 189–199 (QKYVKESHGKD), and arginine 215 each bind ATP. Residues aspartate 260, glutamate 273, and asparagine 275 each contribute to the Mg(2+) site. Positions 260, 273, and 275 each coordinate Mn(2+). At serine 319 the chain carries Phosphoserine. The segment covering 341 to 350 (TINSGSTSSE) has biased composition (polar residues). The segment at 341 to 379 (TINSGSTSSESEPELGEIRDSSASTMGAPPSMLPEPGYN) is disordered.

It belongs to the RimK family. Requires Mg(2+) as cofactor. Mn(2+) is required as a cofactor.

Its subcellular location is the cytoplasm. The catalysed reaction is N-acetyl-L-aspartate + L-glutamate + ATP = N-acetyl-L-aspartyl-L-glutamate + ADP + phosphate + H(+). It catalyses the reaction N-acetyl-L-aspartate + 2 L-glutamate + 2 ATP = N-acetyl-L-aspartyl-L-glutamyl-L-glutamate + 2 ADP + 2 phosphate + 2 H(+). In terms of biological role, catalyzes the synthesis of N-acetyl-L-aspartyl-L-glutamate (NAAG) and N-acetyl-L-aspartyl-L-glutamyl-L-glutamate. This chain is N-acetylaspartylglutamate synthase A (RIMKLA), found in Homo sapiens (Human).